The following is a 119-amino-acid chain: Holo-[acyl-carrier-protein] synthase (119 aa).

Asp7 and Glu53 together coordinate Mg(2+).

This sequence belongs to the P-Pant transferase superfamily. AcpS family. Requires Mg(2+) as cofactor.

It localises to the cytoplasm. It carries out the reaction apo-[ACP] + CoA = holo-[ACP] + adenosine 3',5'-bisphosphate + H(+). Transfers the 4'-phosphopantetheine moiety from coenzyme A to a Ser of acyl-carrier-protein. This chain is Holo-[acyl-carrier-protein] synthase, found in Dehalococcoides mccartyi (strain CBDB1).